The sequence spans 901 residues: HTH-type transcriptional regulator MalT (901 aa).

39-46 (SPAGYGKT) provides a ligand contact to ATP. The 66-residue stretch at 829 to 894 (ELIRTSPLTQ…DAVQHAQQLL (66 aa)) folds into the HTH luxR-type domain. A DNA-binding region (H-T-H motif) is located at residues 853 to 872 (NEQIAGELAVAATTIKTHIR).

Belongs to the MalT family. As to quaternary structure, monomer in solution. Oligomerizes to an active state in the presence of the positive effectors ATP and maltotriose.

Activated by ATP and maltotriose, which are both required for DNA binding. Positively regulates the transcription of the maltose regulon whose gene products are responsible for uptake and catabolism of malto-oligosaccharides. Specifically binds to the promoter region of its target genes, recognizing a short DNA motif called the MalT box. This Salmonella agona (strain SL483) protein is HTH-type transcriptional regulator MalT.